We begin with the raw amino-acid sequence, 239 residues long: Ribosomal RNA large subunit methyltransferase E (239 aa).

Residues G81, W83, D104, D120, and D144 each contribute to the S-adenosyl-L-methionine site. K184 acts as the Proton acceptor in catalysis.

Belongs to the class I-like SAM-binding methyltransferase superfamily. RNA methyltransferase RlmE family.

It is found in the cytoplasm. It catalyses the reaction uridine(2552) in 23S rRNA + S-adenosyl-L-methionine = 2'-O-methyluridine(2552) in 23S rRNA + S-adenosyl-L-homocysteine + H(+). Specifically methylates the uridine in position 2552 of 23S rRNA at the 2'-O position of the ribose in the fully assembled 50S ribosomal subunit. The protein is Ribosomal RNA large subunit methyltransferase E of Rhizobium rhizogenes (strain K84 / ATCC BAA-868) (Agrobacterium radiobacter).